The chain runs to 200 residues: Gene 55 protein (200 aa).

C8 carries S-palmitoyl cysteine; by host lipidation.

This sequence belongs to the herpesviridae UL51 family. Oligomerizes. Interacts with ORF42; this interaction mediates ORF42 incorporation to virions. Post-translationally, phosphorylated. Palmitoylation is necessary for Golgi localization.

The protein resides in the virion tegument. Its subcellular location is the host cytoplasm. It is found in the host Golgi apparatus. Plays several roles during the time course of infection, including egress of virus particles from the perinuclear space and secondary envelopment of cytoplasmic capsids that bud into specific trans-Golgi network (TGN)-derived membranes. The sequence is that of Gene 55 protein (55) from Saimiriine herpesvirus 2 (strain 11) (SaHV-2).